We begin with the raw amino-acid sequence, 418 residues long: Tyrosine--tRNA ligase (418 aa).

Residue Y34 coordinates L-tyrosine. Positions 39-48 (PTGDSMHIGH) match the 'HIGH' region motif. Residues Y166 and Q170 each coordinate L-tyrosine. Residues 228–232 (KFGKT) carry the 'KMSKS' region motif. ATP is bound at residue K231. The 69-residue stretch at 350-418 (QNIVLWLVDA…KKRYFLAHVK (69 aa)) folds into the S4 RNA-binding domain.

The protein belongs to the class-I aminoacyl-tRNA synthetase family. TyrS type 1 subfamily. As to quaternary structure, homodimer.

The protein localises to the cytoplasm. The catalysed reaction is tRNA(Tyr) + L-tyrosine + ATP = L-tyrosyl-tRNA(Tyr) + AMP + diphosphate + H(+). Its function is as follows. Catalyzes the attachment of tyrosine to tRNA(Tyr) in a two-step reaction: tyrosine is first activated by ATP to form Tyr-AMP and then transferred to the acceptor end of tRNA(Tyr). This Lactiplantibacillus plantarum (strain ATCC BAA-793 / NCIMB 8826 / WCFS1) (Lactobacillus plantarum) protein is Tyrosine--tRNA ligase.